A 102-amino-acid chain; its full sequence is Small ribosomal subunit protein uS10 (102 aa).

Belongs to the universal ribosomal protein uS10 family. In terms of assembly, part of the 30S ribosomal subunit.

Its function is as follows. Involved in the binding of tRNA to the ribosomes. The protein is Small ribosomal subunit protein uS10 of Exiguobacterium sp. (strain ATCC BAA-1283 / AT1b).